The chain runs to 650 residues: Probable protein phosphatase 2C 36 (650 aa).

The tract at residues 146–166 (SGKKTKEKAKLKKSGSKSFTK) is disordered. Basic residues predominate over residues 148–166 (KKTKEKAKLKKSGSKSFTK). Residues 239-641 (ESALEEPKIQ…DDVSVIVISL (403 aa)) form the PPM-type phosphatase domain. Mn(2+) is bound by residues aspartate 276, glycine 277, aspartate 569, and aspartate 632.

It belongs to the PP2C family. The cofactor is Mg(2+). Mn(2+) serves as cofactor.

The protein localises to the nucleus. It catalyses the reaction O-phospho-L-seryl-[protein] + H2O = L-seryl-[protein] + phosphate. The catalysed reaction is O-phospho-L-threonyl-[protein] + H2O = L-threonyl-[protein] + phosphate. This Arabidopsis thaliana (Mouse-ear cress) protein is Probable protein phosphatase 2C 36 (PLL3).